The following is a 489-amino-acid chain: Rhamnulokinase (489 aa).

ATP is bound at residue 13-17; it reads ASSGR. Cys-68 and Cys-222 form a disulfide bridge. Substrate is bound by residues Gly-83 and 236-238; that span reads HDT. Asp-237 acts as the Proton acceptor in catalysis. Thr-259 is a binding site for ATP. Asn-296 contributes to the substrate binding site. Gln-304 contacts ATP. An intrachain disulfide couples Cys-353 to Cys-370. Gly-402 lines the ATP pocket. Cys-413 and Cys-417 form a disulfide bridge.

It belongs to the rhamnulokinase family. Mg(2+) serves as cofactor.

The enzyme catalyses L-rhamnulose + ATP = L-rhamnulose 1-phosphate + ADP + H(+). The protein operates within carbohydrate degradation; L-rhamnose degradation; glycerone phosphate from L-rhamnose: step 2/3. Its function is as follows. Involved in the catabolism of L-rhamnose (6-deoxy-L-mannose). Catalyzes the transfer of the gamma-phosphate group from ATP to the 1-hydroxyl group of L-rhamnulose to yield L-rhamnulose 1-phosphate. This is Rhamnulokinase from Salmonella choleraesuis (strain SC-B67).